The sequence spans 208 residues: Uracil phosphoribosyltransferase (208 aa).

Residues R78, R103, and 130–138 (DPMLATGGS) contribute to the 5-phospho-alpha-D-ribose 1-diphosphate site. Residues I193 and 198 to 200 (GDA) each bind uracil. D199 is a 5-phospho-alpha-D-ribose 1-diphosphate binding site.

This sequence belongs to the UPRTase family. Mg(2+) is required as a cofactor.

The catalysed reaction is UMP + diphosphate = 5-phospho-alpha-D-ribose 1-diphosphate + uracil. Its pathway is pyrimidine metabolism; UMP biosynthesis via salvage pathway; UMP from uracil: step 1/1. Allosterically activated by GTP. Its function is as follows. Catalyzes the conversion of uracil and 5-phospho-alpha-D-ribose 1-diphosphate (PRPP) to UMP and diphosphate. In Shewanella halifaxensis (strain HAW-EB4), this protein is Uracil phosphoribosyltransferase.